A 130-amino-acid polypeptide reads, in one-letter code: Ribosome-binding factor A (130 aa).

It belongs to the RbfA family. Monomer. Binds 30S ribosomal subunits, but not 50S ribosomal subunits or 70S ribosomes.

The protein localises to the cytoplasm. Functionally, one of several proteins that assist in the late maturation steps of the functional core of the 30S ribosomal subunit. Associates with free 30S ribosomal subunits (but not with 30S subunits that are part of 70S ribosomes or polysomes). Required for efficient processing of 16S rRNA. May interact with the 5'-terminal helix region of 16S rRNA. The sequence is that of Ribosome-binding factor A from Prochlorococcus marinus (strain AS9601).